The following is a 1985-amino-acid chain: Histone-lysine N-methyltransferase SETD1B (1985 aa).

Residues 1 to 11 show a composition bias toward basic residues; sequence MENSHPHHHHQ. The interval 1 to 25 is disordered; sequence MENSHPHHHHQQPPPQPGPSGERRN. The interaction with WDR82 stretch occupies residues 67–97; that stretch reads VEDPRVVGIWTKNKELELSVPKFKIDEFYVG. The RRM domain occupies 92–180; sequence DEFYVGPVPP…NIIHVELDTK (89 aa). 5 disordered regions span residues 234–304, 353–710, 955–1480, 1519–1624, and 1658–1687; these read GCGS…QDPT, GSSG…PPPA, VKRK…RTGP, QLPP…STKL, and RGPW…PQPL. Composition is skewed to polar residues over residues 242 to 258, 264 to 273, 281 to 304, and 353 to 365; these read VTPN…TAYS, TPNSYGQGTP, PFSQ…QDPT, and GSSG…QSQD. The segment covering 366–381 has biased composition (low complexity); the sequence is ATTFAHTPPPAQTATA. Composition is skewed to pro residues over residues 393-404, 423-433, and 440-449; these read TPAPPFPPPPEE, PAPPPLPPAEP, and GTPPGPPPPD. The segment covering 484 to 512 has biased composition (basic and acidic residues); the sequence is EKPHDSLDSRIEMLLKEQRTKLPFLREQD. The segment covering 522-535 has biased composition (low complexity); the sequence is SPISSSSSQLSPLS. Over residues 583–594 the composition is skewed to pro residues; it reads PRPPPEPGPPDP. Acidic residues predominate over residues 628 to 637; it reads EDMEISDDEM. Positions 650 to 669 are enriched in low complexity; sequence PMVVTPGAGAVAAPNVLAPN. Over residues 670 to 710 the composition is skewed to pro residues; the sequence is LPLPPPPGFPPLPPPPPPPPPQPGFPMPPPLPPPPPPPPPA. Serine 977 and serine 985 each carry phosphoserine. The segment covering 986–1006 has biased composition (basic and acidic residues); sequence ERERDRDIADAPCELTKRDPK. Serine 1022 is subject to Phosphoserine. Residues 1032–1055 are compositionally biased toward low complexity; it reads LSASSSSSASSSSGSSTTSPSSSA. Residues 1058–1083 are compositionally biased toward acidic residues; sequence KEEEDRESTEEEEEEEEEEAEEEEEE. A compositionally biased stretch (low complexity) spans 1087-1097; it reads SRISSPSSSSS. A compositionally biased stretch (acidic residues) spans 1100–1120; it reads KDDEDDNEADSDGQIDSDIDD. Residues 1143-1178 show a composition bias toward low complexity; it reads SITTSKAPAESSSSSSESSGSSEFESSSESESSSSS. Residues 1179 to 1202 are compositionally biased toward acidic residues; that stretch reads SEDEEEMTVPGVEEEEEEEEEEEK. Positions 1205-1217 are enriched in low complexity; it reads AMAAATVVAMAEE. Residues 1247-1261 are compositionally biased toward acidic residues; the sequence is GTEEEVDIEAEDEVP. A phosphoserine mark is found at serine 1283, serine 1301, and serine 1354. Residues 1331 to 1373 are compositionally biased toward pro residues; sequence EPPPMLSLPLQPPLPPPRLLRPPSPPPEPETPEPPKPPVPLEP. Low complexity predominate over residues 1402–1442; it reads PGGEPPLSGSSSGLSLSSPQVPGSPFSYPSPSPGLSSGGLP. Residues 1535–1544 are compositionally biased toward basic residues; the sequence is IKRKPGRPRR. 2 stretches are compositionally biased toward pro residues: residues 1600–1619 and 1678–1687; these read PAPP…PPPV and SPEPSPPQPL. Phosphoserine is present on residues serine 1678 and serine 1682. Positions 1764 to 1769 match the WDR5 interaction motif (WIN) motif; that stretch reads GCARSE. A disordered region spans residues 1786 to 1819; it reads SRASTDEPPMDTQGMSIPAQPHASTRAGSERRSE. Residues 1817–1822 carry the RxxxRR motif motif; it reads RSEQRR. The 118-residue stretch at 1846–1963 folds into the SET domain; the sequence is KKLKFCKSHI…VNEEITYDYK (118 aa). Tyrosine 1962 is an S-adenosyl-L-methionine binding site. The Post-SET domain occupies 1969 to 1985; that stretch reads VKIPCLCGSENCRGTLN.

Belongs to the class V-like SAM-binding methyltransferase superfamily. In terms of assembly, component of the SET1B/COMPASS complex composed of the catalytic subunit SETD1B, WDR5, WDR82, RBBP5, ASH2L/ASH2, CXXC1/CFP1, HCFC1, DPY30 homotrimer and BOD1. Forms a core complex with the evolutionary conserved subcomplex WRAD composed of WDR5, RBBP5, ASH2L/ASH2 and DPY30 subunits; WRAD differentially stimulates the methyltransferase activity. Interacts with HCFC1 and ASH2L/ASH2. Interacts (via the RRM domain) with WDR82. Interacts (via the RRM domain) with hyperphosphorylated C-terminal domain (CTD) of RNA polymerase II large subunit (POLR2A) only in the presence of WDR82. Binds specifically to CTD heptad repeats phosphorylated on 'Ser-5' of each heptad. Interacts with RBM15. Interacts (via WIN motif) with WDR5. In terms of tissue distribution, widely expressed.

Its subcellular location is the nucleus. The protein resides in the nucleus speckle. It localises to the chromosome. The protein localises to the cytoplasm. It carries out the reaction L-lysyl(4)-[histone H3] + S-adenosyl-L-methionine = N(6)-methyl-L-lysyl(4)-[histone H3] + S-adenosyl-L-homocysteine + H(+). The catalysed reaction is N(6)-methyl-L-lysyl(4)-[histone H3] + S-adenosyl-L-methionine = N(6),N(6)-dimethyl-L-lysyl(4)-[histone H3] + S-adenosyl-L-homocysteine + H(+). It catalyses the reaction N(6),N(6)-dimethyl-L-lysyl(4)-[histone H3] + S-adenosyl-L-methionine = N(6),N(6),N(6)-trimethyl-L-lysyl(4)-[histone H3] + S-adenosyl-L-homocysteine + H(+). Histone methyltransferase that catalyzes methyl group transfer from S-adenosyl-L-methionine to the epsilon-amino group of 'Lys-4' of histone H3 (H3K4) via a non-processive mechanism. Part of chromatin remodeling machinery, forms H3K4me1, H3K4me2 and H3K4me3 methylation marks at active chromatin sites where transcription and DNA repair take place. Plays an essential role in regulating the transcriptional programming of multipotent hematopoietic progenitor cells and lymphoid lineage specification during hematopoiesis. The sequence is that of Histone-lysine N-methyltransferase SETD1B (Setd1b) from Mus musculus (Mouse).